Consider the following 249-residue polypeptide: Small ribosomal subunit protein uS2 (249 aa).

Belongs to the universal ribosomal protein uS2 family.

This chain is Small ribosomal subunit protein uS2, found in Chlorobaculum tepidum (strain ATCC 49652 / DSM 12025 / NBRC 103806 / TLS) (Chlorobium tepidum).